The following is a 177-amino-acid chain: KxDL motif-containing protein 1 (177 aa).

N-acetylmethionine is present on Met1. Residues 92 to 177 (ARQHPEAFSH…TDDEEETREE (86 aa)) form a disordered region. The span at 119–145 (SITTTIATSEQSTGSCDTSPDTASPSF) shows a compositional bias: polar residues.

It belongs to the KXD1 family. In terms of assembly, component of the BLOC-one-related complex (BORC) which is composed of BLOC1S1, BLOC1S2, BORCS5, BORCS6, BORCS7, BORCS8, KXD1 and SNAPIN. Associates with the BLOC-1 complex. Interacts with BLOC1S1. Interacts with DTNBP1/BLOC1S7 (via coiled-coil domain).

It localises to the lysosome membrane. Its function is as follows. As part of the BORC complex may play a role in lysosomes movement and localization at the cell periphery. Associated with the cytosolic face of lysosomes, the BORC complex may recruit ARL8B and couple lysosomes to microtubule plus-end-directed kinesin motor. May also be involved in the biogenesis of lysosome-related organelles such as melanosomes. The polypeptide is KxDL motif-containing protein 1 (Kxd1) (Rattus norvegicus (Rat)).